The sequence spans 147 residues: Insertion element IS402 uncharacterized 16.2 kDa protein (147 aa).

The segment at 106–147 (DSSSIRAVGAGQKLGQTPPIARDPVPSTTSSPTPTVRRSPRS) is disordered. A compositionally biased stretch (low complexity) spans 129–147 (PVPSTTSSPTPTVRRSPRS).

Belongs to the transposase 6 family.

The chain is Insertion element IS402 uncharacterized 16.2 kDa protein from Burkholderia cepacia (Pseudomonas cepacia).